The sequence spans 399 residues: Putative cytochrome P450 133B2 (399 aa).

C348 serves as a coordination point for heme.

It belongs to the cytochrome P450 family. It depends on heme as a cofactor.

The polypeptide is Putative cytochrome P450 133B2 (cyp133B2) (Xylella fastidiosa (strain Temecula1 / ATCC 700964)).